Reading from the N-terminus, the 233-residue chain is Sugar fermentation stimulation protein homolog (233 aa).

The protein belongs to the SfsA family.

This Saccharophagus degradans (strain 2-40 / ATCC 43961 / DSM 17024) protein is Sugar fermentation stimulation protein homolog.